Reading from the N-terminus, the 2164-residue chain is Genome polyprotein (2164 aa).

A lipid anchor (N-myristoyl glycine; by host) is attached at Gly-2. Over 2–1477 (GAQVSRQNVG…DLGIANMTIG (1476 aa)) the chain is Cytoplasmic. Positions 208-239 (NVSVGYNHTHPGEQGREVVPSRTSSDNKRPSD) are disordered. Positions 572 to 588 (LTQNPVENYIDSVLNEV) are amphipathic alpha-helix. Residues His-884 and Asp-901 each act as for protease 2A activity in the active site. Cys-918 and Cys-920 together coordinate Zn(2+). Cys-972 serves as the catalytic For protease 2A activity. Zn(2+) contacts are provided by Cys-978 and His-980. Positions 1104–1173 (SDSWLKKFTE…TIRLAPASVQ (70 aa)) are membrane-binding. The segment at 1104-1237 (SDSWLKKFTE…SPGTGKSLAT (134 aa)) is oligomerization. The tract at residues 1125-1129 (GQKIS) is RNA-binding. Positions 1197–1357 (EARRIKNLYI…KEYLLDGKLD (161 aa)) constitute an SF3 helicase domain. ATP is bound at residue 1227–1234 (GSPGTGKS). Zn(2+) is bound by residues Cys-1365, Cys-1376, and Cys-1381. Residues 1365–1381 (CDVNIKIGNAKCCPFIC) form a C4-type; degenerate zinc finger. Residues 1408-1415 (EDRRRSSA) are RNA-binding. The oligomerization stretch occupies residues 1419 to 1424 (MEAIFQ). An intramembrane segment occupies 1478–1493 (IIANVVSIVGVIYIIY). Topologically, residues 1494–2164 (KLFCTLQGPY…VLEHEWYEKF (671 aa)) are cytoplasmic. O-(5'-phospho-RNA)-tyrosine is present on Tyr-1503. The Peptidase C3 domain occupies 1522–1700 (GPEEEFGRSL…FSAMLLKSYF (179 aa)). Residues His-1561, Glu-1592, and Cys-1668 each act as for protease 3C activity in the active site. Positions 1932–2045 (ECLMAFDYSN…SYNFKLDMAV (114 aa)) constitute a RdRp catalytic domain. Residues Asp-1938 and Asp-2031 each contribute to the Mg(2+) site.

This sequence belongs to the picornaviruses polyprotein family. In terms of assembly, interacts with capsid protein VP1 and capsid protein VP3 to form heterotrimeric protomers. As to quaternary structure, interacts with capsid protein VP0, and capsid protein VP3 to form heterotrimeric protomers. Five protomers subsequently associate to form pentamers which serve as building blocks for the capsid. Interacts with capsid protein VP2, capsid protein VP3 and capsid protein VP4 following cleavage of capsid protein VP0. Interacts with capsid protein VP1 and capsid protein VP3 in the mature capsid. In terms of assembly, interacts with capsid protein VP0 and capsid protein VP1 to form heterotrimeric protomers. Five protomers subsequently associate to form pentamers which serve as building blocks for the capsid. Interacts with capsid protein VP4 in the mature capsid. Interacts with protein 2C; this interaction may be important for virion morphogenesis. As to quaternary structure, interacts with capsid protein VP1 and capsid protein VP3. Homodimer. In terms of assembly, homohexamer; forms a hexameric ring structure with 6-fold symmetry characteristic of AAA+ ATPases. Interacts (via N-terminus) with host RTN3 (via reticulon domain); this interaction is important for viral replication. Interacts with capsid protein VP3; this interaction may be important for virion morphogenesis. As to quaternary structure, interacts with protein 3CD. Homodimer. Interacts with host GBF1. Interacts (via GOLD domain) with host ACBD3 (via GOLD domain); this interaction allows the formation of a viral protein 3A/ACBD3 heterotetramer with a 2:2 stoichiometry, which will stimulate the recruitment of host PI4KB in order to synthesize PI4P at the viral RNA replication sites. In terms of assembly, interacts with RNA-directed RNA polymerase. As to quaternary structure, interacts with protein 3AB and with RNA-directed RNA polymerase. Interacts with Viral protein genome-linked and with protein 3CD. It depends on Mg(2+) as a cofactor. Post-translationally, specific enzymatic cleavages in vivo by the viral proteases yield processing intermediates and the mature proteins. In terms of processing, myristoylation is required for the formation of pentamers during virus assembly. Further assembly of 12 pentamers and a molecule of genomic RNA generates the provirion. During virion maturation, immature virions are rendered infectious following cleavage of VP0 into VP4 and VP2. This maturation seems to be an autocatalytic event triggered by the presence of RNA in the capsid and it is followed by a conformational change infectious virion. Post-translationally, myristoylation is required during RNA encapsidation and formation of the mature virus particle. In terms of processing, VPg is uridylylated by the polymerase into VPg-pUpU. This acts as a nucleotide-peptide primer for the genomic RNA replication.

It localises to the virion. Its subcellular location is the host cytoplasm. It is found in the host cytoplasmic vesicle membrane. The protein resides in the host nucleus. The enzyme catalyses a ribonucleoside 5'-triphosphate + H2O = a ribonucleoside 5'-diphosphate + phosphate + H(+). It catalyses the reaction Selective cleavage of Tyr-|-Gly bond in the picornavirus polyprotein.. The catalysed reaction is RNA(n) + a ribonucleoside 5'-triphosphate = RNA(n+1) + diphosphate. It carries out the reaction Selective cleavage of Gln-|-Gly bond in the poliovirus polyprotein. In other picornavirus reactions Glu may be substituted for Gln, and Ser or Thr for Gly.. With respect to regulation, replication or transcription is subject to high level of random mutations by the nucleotide analog ribavirin. In terms of biological role, forms an icosahedral capsid of pseudo T=3 symmetry with capsid proteins VP2 and VP3. The capsid is 300 Angstroms in diameter, composed of 60 copies of each capsid protein and enclosing the viral positive strand RNA genome. Capsid protein VP1 mainly forms the vertices of the capsid. Capsid protein VP1 interacts with host cell receptor to provide virion attachment to target host cells. This attachment induces virion internalization. Tyrosine kinases are probably involved in the entry process. After binding to its receptor, the capsid undergoes conformational changes. Capsid protein VP1 N-terminus (that contains an amphipathic alpha-helix) and capsid protein VP4 are externalized. Together, they shape a pore in the host membrane through which viral genome is translocated to host cell cytoplasm. Its function is as follows. Forms an icosahedral capsid of pseudo T=3 symmetry with capsid proteins VP2 and VP3. The capsid is 300 Angstroms in diameter, composed of 60 copies of each capsid protein and enclosing the viral positive strand RNA genome. Lies on the inner surface of the capsid shell. After binding to the host receptor, the capsid undergoes conformational changes. Capsid protein VP4 is released, Capsid protein VP1 N-terminus is externalized, and together, they shape a pore in the host membrane through which the viral genome is translocated into the host cell cytoplasm. Functionally, component of immature procapsids, which is cleaved into capsid proteins VP4 and VP2 after maturation. Allows the capsid to remain inactive before the maturation step. In terms of biological role, cysteine protease that cleaves viral polyprotein and specific host proteins. It is responsible for the autocatalytic cleavage between the P1 and P2 regions, which is the first cleavage occurring in the polyprotein. Also cleaves the host translation initiation factor EIF4G1, in order to shut down the capped cellular mRNA translation. Inhibits the host nucleus-cytoplasm protein and RNA trafficking by cleaving host members of the nuclear pores. Counteracts stress granule formation probably by antagonizing its assembly or promoting its dissassembly. Its function is as follows. Plays an essential role in the virus replication cycle by acting as a viroporin. Creates a pore in the host endoplasmic reticulum and as a consequence releases Ca2+ in the cytoplasm of infected cell. In turn, high levels of cytoplasmic calcium may trigger membrane trafficking and transport of viral ER-associated proteins to viroplasms, sites of viral genome replication. Induces and associates with structural rearrangements of intracellular membranes. Displays RNA-binding, nucleotide binding and NTPase activities. May play a role in virion morphogenesis and viral RNA encapsidation by interacting with the capsid protein VP3. Functionally, localizes the viral replication complex to the surface of membranous vesicles. Together with protein 3CD binds the Cis-Active RNA Element (CRE) which is involved in RNA synthesis initiation. Acts as a cofactor to stimulate the activity of 3D polymerase, maybe through a nucleid acid chaperone activity. In terms of biological role, localizes the viral replication complex to the surface of membranous vesicles. It inhibits host cell endoplasmic reticulum-to-Golgi apparatus transport and causes the disassembly of the Golgi complex, possibly through GBF1 interaction. This would result in depletion of MHC, trail receptors and IFN receptors at the host cell surface. Plays an essential role in viral RNA replication by recruiting ACBD3 and PI4KB at the viral replication sites, thereby allowing the formation of the rearranged membranous structures where viral replication takes place. Its function is as follows. Acts as a primer for viral RNA replication and remains covalently bound to viral genomic RNA. VPg is uridylylated prior to priming replication into VPg-pUpU. The oriI viral genomic sequence may act as a template for this. The VPg-pUpU is then used as primer on the genomic RNA poly(A) by the RNA-dependent RNA polymerase to replicate the viral genome. During genome replication, the VPg-RNA linkage is removed by the host TDP2, thereby accelerating replication. During the late stage of the replication cycle, host TDP2 is excluded from sites of viral RNA synthesis and encapsidation, allowing for the generation of progeny virions. Involved in the viral replication complex and viral polypeptide maturation. It exhibits protease activity with a specificity and catalytic efficiency that is different from protease 3C. Protein 3CD lacks polymerase activity. Protein 3CD binds to the 5'UTR of the viral genome. Functionally, replicates the viral genomic RNA on the surface of intracellular membranes. May form linear arrays of subunits that propagate along a strong head-to-tail interaction called interface-I. Covalently attaches UMP to a tyrosine of VPg, which is used to prime RNA synthesis. The positive stranded RNA genome is first replicated at virus induced membranous vesicles, creating a dsRNA genomic replication form. This dsRNA is then used as template to synthesize positive stranded RNA genomes. ss(+)RNA genomes are either translated, replicated or encapsidated. In terms of biological role, major viral protease that mediates proteolytic processing of the polyprotein. Cleaves host EIF5B, contributing to host translation shutoff. Also cleaves host PABPC1, contributing to host translation shutoff. Cleaves host NLRP1, triggers host N-glycine-mediated degradation of the autoinhibitory NLRP1 N-terminal fragment. This Human rhinovirus A serotype 89 (strain 41467-Gallo) (HRV-89) protein is Genome polyprotein.